The chain runs to 358 residues: Polyadenylate-binding protein-interacting protein 11 (358 aa).

The span at 1–19 (MAVVETGAAATAADAGGVV) shows a compositional bias: low complexity. Residues 1 to 45 (MAVVETGAAATAADAGGVVIQPPPSSPPSSMTSQDSGVSSDDQNH) are disordered. Residues 31–41 (MTSQDSGVSSD) show a composition bias toward polar residues. A PAM2-like motif is present at residues 92-102 (KLNPMAEEFVP). The tract at residues 136–164 (GGYGNENGGFRRKKSFGQGKRRMNARTSM) is disordered. Residues 145–159 (FRRKKSFGQGKRRMN) are compositionally biased toward basic residues. The short motif at 146-157 (RRKKSFGQGKRR) is the Bipartite nuclear localization signal element. 2 consecutive RRM domains span residues 173 to 248 (RTVY…PSKT) and 270 to 346 (RTIY…PSKT).

Expressed in cauline leaves, stems, immature siliques and primary inflorescences.

The protein localises to the nucleus. The chain is Polyadenylate-binding protein-interacting protein 11 (CID11) from Arabidopsis thaliana (Mouse-ear cress).